We begin with the raw amino-acid sequence, 212 residues long: Thiamine-phosphate synthase (212 aa).

Residues 40–44 and Asn75 contribute to the 4-amino-2-methyl-5-(diphosphooxymethyl)pyrimidine site; that span reads QFREK. Mg(2+) is bound by residues Asp76 and Asp95. Ser113 contacts 4-amino-2-methyl-5-(diphosphooxymethyl)pyrimidine. 139–141 lines the 2-[(2R,5Z)-2-carboxy-4-methylthiazol-5(2H)-ylidene]ethyl phosphate pocket; it reads TPS. Lys142 contributes to the 4-amino-2-methyl-5-(diphosphooxymethyl)pyrimidine binding site. Residues Gly171 and 191–192 each bind 2-[(2R,5Z)-2-carboxy-4-methylthiazol-5(2H)-ylidene]ethyl phosphate; that span reads IS.

This sequence belongs to the thiamine-phosphate synthase family. It depends on Mg(2+) as a cofactor.

The enzyme catalyses 2-[(2R,5Z)-2-carboxy-4-methylthiazol-5(2H)-ylidene]ethyl phosphate + 4-amino-2-methyl-5-(diphosphooxymethyl)pyrimidine + 2 H(+) = thiamine phosphate + CO2 + diphosphate. It catalyses the reaction 2-(2-carboxy-4-methylthiazol-5-yl)ethyl phosphate + 4-amino-2-methyl-5-(diphosphooxymethyl)pyrimidine + 2 H(+) = thiamine phosphate + CO2 + diphosphate. The catalysed reaction is 4-methyl-5-(2-phosphooxyethyl)-thiazole + 4-amino-2-methyl-5-(diphosphooxymethyl)pyrimidine + H(+) = thiamine phosphate + diphosphate. It functions in the pathway cofactor biosynthesis; thiamine diphosphate biosynthesis; thiamine phosphate from 4-amino-2-methyl-5-diphosphomethylpyrimidine and 4-methyl-5-(2-phosphoethyl)-thiazole: step 1/1. Its function is as follows. Condenses 4-methyl-5-(beta-hydroxyethyl)thiazole monophosphate (THZ-P) and 2-methyl-4-amino-5-hydroxymethyl pyrimidine pyrophosphate (HMP-PP) to form thiamine monophosphate (TMP). The polypeptide is Thiamine-phosphate synthase (Staphylococcus carnosus (strain TM300)).